We begin with the raw amino-acid sequence, 347 residues long: Histone deacetylase 11 (347 aa).

The histone deacetylase stretch occupies residues 14 to 318 (KRWPIVYSPR…ARIIADSILN (305 aa)). Residue His143 is part of the active site.

The protein belongs to the histone deacetylase family. As to quaternary structure, interacts with HDAC6.

Its subcellular location is the nucleus. It carries out the reaction N(6)-acetyl-L-lysyl-[histone] + H2O = L-lysyl-[histone] + acetate. Its function is as follows. Responsible for the deacetylation of lysine residues on the N-terminal part of the core histones (H2A, H2B, H3 and H4). Histone deacetylation gives a tag for epigenetic repression and plays an important role in transcriptional regulation, cell cycle progression and developmental events. Histone deacetylases act via the formation of large multiprotein complexes. The chain is Histone deacetylase 11 (Hdac11) from Mus musculus (Mouse).